The primary structure comprises 334 residues: Glycerol-1-phosphate dehydrogenase [NAD(P)+] (334 aa).

NAD(+) is bound by residues 77 to 81 (GRPID) and 99 to 102 (TTAS). A substrate-binding site is contributed by aspartate 104. Serine 108 contributes to the NAD(+) binding site. Position 147 (aspartate 147) interacts with substrate. Zn(2+)-binding residues include aspartate 147 and histidine 225. Histidine 229 contacts substrate. A Zn(2+)-binding site is contributed by histidine 246.

This sequence belongs to the glycerol-1-phosphate dehydrogenase family. The cofactor is Zn(2+).

It is found in the cytoplasm. The enzyme catalyses sn-glycerol 1-phosphate + NAD(+) = dihydroxyacetone phosphate + NADH + H(+). It carries out the reaction sn-glycerol 1-phosphate + NADP(+) = dihydroxyacetone phosphate + NADPH + H(+). It functions in the pathway membrane lipid metabolism; glycerophospholipid metabolism. Functionally, catalyzes the NAD(P)H-dependent reduction of dihydroxyacetonephosphate (DHAP or glycerone phosphate) to glycerol 1-phosphate (G1P). The G1P thus generated is used as the glycerophosphate backbone of phospholipids in the cellular membranes of Archaea. In Methanococcus maripaludis (strain DSM 14266 / JCM 13030 / NBRC 101832 / S2 / LL), this protein is Glycerol-1-phosphate dehydrogenase [NAD(P)+].